Consider the following 624-residue polypeptide: Dihydroxy-acid dehydratase (624 aa).

Asp-81 serves as a coordination point for Mg(2+). Residue Cys-122 coordinates [2Fe-2S] cluster. The Mg(2+) site is built by Asp-123 and Lys-124. Lys-124 carries the N6-carboxylysine modification. Cys-195 is a binding site for [2Fe-2S] cluster. Residue Glu-499 coordinates Mg(2+). Residue Ser-525 is the Proton acceptor of the active site.

Belongs to the IlvD/Edd family. Homodimer. [2Fe-2S] cluster serves as cofactor. It depends on Mg(2+) as a cofactor.

The enzyme catalyses (2R)-2,3-dihydroxy-3-methylbutanoate = 3-methyl-2-oxobutanoate + H2O. It catalyses the reaction (2R,3R)-2,3-dihydroxy-3-methylpentanoate = (S)-3-methyl-2-oxopentanoate + H2O. It functions in the pathway amino-acid biosynthesis; L-isoleucine biosynthesis; L-isoleucine from 2-oxobutanoate: step 3/4. The protein operates within amino-acid biosynthesis; L-valine biosynthesis; L-valine from pyruvate: step 3/4. Functions in the biosynthesis of branched-chain amino acids. Catalyzes the dehydration of (2R,3R)-2,3-dihydroxy-3-methylpentanoate (2,3-dihydroxy-3-methylvalerate) into 2-oxo-3-methylpentanoate (2-oxo-3-methylvalerate) and of (2R)-2,3-dihydroxy-3-methylbutanoate (2,3-dihydroxyisovalerate) into 2-oxo-3-methylbutanoate (2-oxoisovalerate), the penultimate precursor to L-isoleucine and L-valine, respectively. The polypeptide is Dihydroxy-acid dehydratase (Shewanella baltica (strain OS155 / ATCC BAA-1091)).